Consider the following 300-residue polypeptide: Epimerase family protein SACOL0834 (300 aa).

Belongs to the NAD(P)-dependent epimerase/dehydratase family. SDR39U1 subfamily.

This Staphylococcus aureus (strain COL) protein is Epimerase family protein SACOL0834.